Here is a 372-residue protein sequence, read N- to C-terminus: MNSGLDLEYSFNEILKGFGLSSELAHIIWLPLPMLLVLVSAVVGVLVTVWLERKISAAAQQRIGPEYAGALGVLQPIADGLKLLVKEDIIPAKADSILFTAGPILVLVPVILSWLIVPFGQNLLISNVGIGIFLWIALSSIQPIGLLMSGYASNNKYSLLGGLRAAAQSISYEIPLALSVLAIVLMTNSLSTIDIVNQQSGAGILSWNIWRQPVGFIIFWICALAECERLPFDLPEAEEELVAGYQTEYAGMKFALFYLGSYINLILSALLVSILYLGGWGFPIPVEIIAKALNLPIDAPVIQVFTASIGIIMTVLKAYLLVFVAILLRWTTPRVRIDQLLDLGWKFLLPISLANLLVTAGLKLAFPQFFGG.

The next 8 membrane-spanning stretches (helical) occupy residues 27 to 47 (IIWLPLPMLLVLVSAVVGVLV), 97 to 117 (ILFTAGPILVLVPVILSWLIV), 128 to 148 (VGIGIFLWIALSSIQPIGLLM), 176 to 196 (LALSVLAIVLMTNSLSTIDIV), 204 to 224 (ILSWNIWRQPVGFIIFWICAL), 266 to 286 (ILSALLVSILYLGGWGFPIPV), 308 to 328 (SIGIIMTVLKAYLLVFVAILL), and 347 to 367 (FLLPISLANLLVTAGLKLAFP).

It belongs to the complex I subunit 1 family. In terms of assembly, NDH-1 is composed of at least 11 different subunits.

The protein resides in the cellular thylakoid membrane. The enzyme catalyses a plastoquinone + NADH + (n+1) H(+)(in) = a plastoquinol + NAD(+) + n H(+)(out). It carries out the reaction a plastoquinone + NADPH + (n+1) H(+)(in) = a plastoquinol + NADP(+) + n H(+)(out). Functionally, NDH-1 shuttles electrons from an unknown electron donor, via FMN and iron-sulfur (Fe-S) centers, to quinones in the respiratory and/or the photosynthetic chain. The immediate electron acceptor for the enzyme in this species is believed to be plastoquinone. Couples the redox reaction to proton translocation, and thus conserves the redox energy in a proton gradient. The chain is NAD(P)H-quinone oxidoreductase subunit 1 from Prochlorococcus marinus subsp. pastoris (strain CCMP1986 / NIES-2087 / MED4).